The primary structure comprises 341 residues: MKAHFGVTVWLGVCCSMTLLMVVIGGITRLTHSGLSITEWQPIVGVVPPIGDEAWLREKEKYAQTPEYRHRAADISLDDFKRIYIIEYIHRLFGRALGAVFCLPIPYFAITKRIDRAMVAKLLIVALLGGMQGAMGWFMVKSGLVDTPRVSHYRLAGHLFLTILLFSILWHSFLRCAGVRSTTTTTNARFFTAAAVVGLTVLQMVLGALVAGLDAGLTYNTFPLMDGAIIPQSLFSAKLWHGGFLHDVTAVQFLHRLVAVLIVVCAAPLPFWLKTRGAWLFLACVALQFLLGVATLVSVVHIFLAAMHQVFGFVTLAAGVHMLCRLRREGSTCISGHAGIS.

Helical transmembrane passes span Val-7–Ile-27, Leu-92–Lys-112, Met-118–Phe-138, Leu-159–Val-179, Phe-190–Val-210, Phe-253–Leu-273, Leu-280–Val-300, and Ile-302–Met-322. Heme is bound at residue His-255. His-308 provides a ligand contact to heme.

The protein belongs to the COX15/CtaA family. Type 2 subfamily. In terms of assembly, interacts with CtaB. Heme b is required as a cofactor.

Its subcellular location is the cell membrane. It catalyses the reaction Fe(II)-heme o + 2 A + H2O = Fe(II)-heme a + 2 AH2. The protein operates within porphyrin-containing compound metabolism; heme A biosynthesis; heme A from heme O: step 1/1. Its function is as follows. Catalyzes the conversion of heme O to heme A by two successive hydroxylations of the methyl group at C8. The first hydroxylation forms heme I, the second hydroxylation results in an unstable dihydroxymethyl group, which spontaneously dehydrates, resulting in the formyl group of heme A. This chain is Heme A synthase, found in Anaplasma marginale (strain St. Maries).